The following is a 131-amino-acid chain: Large ribosomal subunit protein bL21 (131 aa).

Basic and acidic residues predominate over residues 106 to 116 (TIDDMPKKEAA). Positions 106 to 131 (TIDDMPKKEAAPAKARRSTKKAAAAE) are disordered.

This sequence belongs to the bacterial ribosomal protein bL21 family. In terms of assembly, part of the 50S ribosomal subunit. Contacts protein L20.

Functionally, this protein binds to 23S rRNA in the presence of protein L20. This is Large ribosomal subunit protein bL21 from Koribacter versatilis (strain Ellin345).